Consider the following 340-residue polypeptide: MTSVLGLLKPLKKAIAAIAVLVLCIGCVQAPTISENPWQEIDLNTDSTFANIAFTDDLQHGWLVGTKETLFETTDGGKTWAERVIDLGDEKESFTGVSFSGQEGWITGRPSILLHTDDGGEHWSRIALSSQLPGAPYNITALGPNTAEMVTDLGAIYKTTDGGKNWKALVEGAVGVARTIERSADGKYVAVSARGNFYSTWSPGDTEWTPHNRNSSRRLQSMGFNGEDKLWLLARGGVVQFSDDTNPDNAEAWSEPVTPQYRNSVGLLHIGYRTPAELWAVGGSGSVVVSKDGGDTWFRDAALEEIPTNFYRVVFLNENKGFILGQQGVILRYDTSTEAA.

The signal sequence occupies residues 1–26 (MTSVLGLLKPLKKAIAAIAVLVLCIG). The N-palmitoyl cysteine moiety is linked to residue Cys-27. Cys-27 carries S-diacylglycerol cysteine lipidation.

This sequence belongs to the Ycf48 family. As to quaternary structure, part of early PSII assembly complexes which includes D1 (psbA) and PsbI; not found in mature PSII. Binds to the lumenal side of PSII complexes. Interacts with YidC.

Its subcellular location is the cellular thylakoid membrane. Functionally, a factor required for optimal assembly of photosystem II (PSII), acting in the early stages of PSII assembly. Also plays a role in replacement of photodamaged D1 (psbA). Assists YidC in synthesis of chlorophyll-binding proteins. This chain is Photosystem II assembly lipoprotein Ycf48, found in Picosynechococcus sp. (strain ATCC 27264 / PCC 7002 / PR-6) (Agmenellum quadruplicatum).